The chain runs to 252 residues: Chitooligosaccharide deacetylase (252 aa).

The Mg(2+) site is built by His61 and His125.

The protein belongs to the YdjC deacetylase family. ChbG subfamily. In terms of assembly, homodimer. Mg(2+) is required as a cofactor.

It localises to the cytoplasm. The catalysed reaction is N,N'-diacetylchitobiose + H2O = N-acetyl-beta-D-glucosaminyl-(1-&gt;4)-D-glucosamine + acetate. It carries out the reaction diacetylchitobiose-6'-phosphate + H2O = N'-monoacetylchitobiose-6'-phosphate + acetate. It functions in the pathway glycan degradation; chitin degradation. Functionally, involved in the degradation of chitin. ChbG is essential for growth on the acetylated chitooligosaccharides chitobiose and chitotriose but is dispensable for growth on cellobiose and chitosan dimer, the deacetylated form of chitobiose. Deacetylation of chitobiose-6-P and chitotriose-6-P is necessary for both the activation of the chb promoter by the regulatory protein ChbR and the hydrolysis of phosphorylated beta-glucosides by the phospho-beta-glucosidase ChbF. Catalyzes the removal of only one acetyl group from chitobiose-6-P to yield monoacetylchitobiose-6-P, the inducer of ChbR and the substrate of ChbF. In Klebsiella pneumoniae (strain 342), this protein is Chitooligosaccharide deacetylase.